The primary structure comprises 198 residues: dITP/XTP pyrophosphatase (198 aa).

7–12 (TRNAGK) contacts substrate. Mg(2+)-binding residues include E40 and D69. Residue D69 is the Proton acceptor of the active site. Substrate contacts are provided by residues S70, 152–155 (FGYD), K175, and 180–181 (HR).

The protein belongs to the HAM1 NTPase family. Homodimer. Mg(2+) is required as a cofactor.

It carries out the reaction XTP + H2O = XMP + diphosphate + H(+). It catalyses the reaction dITP + H2O = dIMP + diphosphate + H(+). The catalysed reaction is ITP + H2O = IMP + diphosphate + H(+). Pyrophosphatase that catalyzes the hydrolysis of nucleoside triphosphates to their monophosphate derivatives, with a high preference for the non-canonical purine nucleotides XTP (xanthosine triphosphate), dITP (deoxyinosine triphosphate) and ITP. Seems to function as a house-cleaning enzyme that removes non-canonical purine nucleotides from the nucleotide pool, thus preventing their incorporation into DNA/RNA and avoiding chromosomal lesions. This chain is dITP/XTP pyrophosphatase, found in Exiguobacterium sibiricum (strain DSM 17290 / CCUG 55495 / CIP 109462 / JCM 13490 / 255-15).